Reading from the N-terminus, the 209-residue chain is Large ribosomal subunit protein uL3 (209 aa).

A disordered region spans residues 122–152; the sequence is AIKRHGQSRGPMSHGSRYHRRPGSMGPVDPN.

It belongs to the universal ribosomal protein uL3 family. As to quaternary structure, part of the 50S ribosomal subunit. Forms a cluster with proteins L14 and L19. Interacts with RNA helicase CshA.

One of the primary rRNA binding proteins, it binds directly near the 3'-end of the 23S rRNA, where it nucleates assembly of the 50S subunit. Strongly stimulates 23S rRNA precursor processing by mini-ribonuclease 3 (MrnC); 20-30% DMSO can replace L3, suggesting the protein may alter rRNA conformation. This chain is Large ribosomal subunit protein uL3, found in Bacillus subtilis (strain 168).